Consider the following 335-residue polypeptide: Holliday junction branch migration complex subunit RuvB (335 aa).

A large ATPase domain (RuvB-L) region spans residues 2-184 (ADERIVSAEN…FGIVEHMAYY (183 aa)). Residues Leu-23, Arg-24, Gly-65, Lys-68, Thr-69, Thr-70, 131–133 (EDF), Arg-174, Tyr-184, and Arg-221 contribute to the ATP site. Position 69 (Thr-69) interacts with Mg(2+). Residues 185–255 (TEADLMDIVQ…IADHALSQLQ (71 aa)) form a small ATPAse domain (RuvB-S) region. The head domain (RuvB-H) stretch occupies residues 258-335 (IRGLDGVDRK…AHLGMPYPEK (78 aa)). DNA is bound by residues Arg-313 and Arg-318.

It belongs to the RuvB family. In terms of assembly, homohexamer. Forms an RuvA(8)-RuvB(12)-Holliday junction (HJ) complex. HJ DNA is sandwiched between 2 RuvA tetramers; dsDNA enters through RuvA and exits via RuvB. An RuvB hexamer assembles on each DNA strand where it exits the tetramer. Each RuvB hexamer is contacted by two RuvA subunits (via domain III) on 2 adjacent RuvB subunits; this complex drives branch migration. In the full resolvosome a probable DNA-RuvA(4)-RuvB(12)-RuvC(2) complex forms which resolves the HJ.

It is found in the cytoplasm. It catalyses the reaction ATP + H2O = ADP + phosphate + H(+). The RuvA-RuvB-RuvC complex processes Holliday junction (HJ) DNA during genetic recombination and DNA repair, while the RuvA-RuvB complex plays an important role in the rescue of blocked DNA replication forks via replication fork reversal (RFR). RuvA specifically binds to HJ cruciform DNA, conferring on it an open structure. The RuvB hexamer acts as an ATP-dependent pump, pulling dsDNA into and through the RuvAB complex. RuvB forms 2 homohexamers on either side of HJ DNA bound by 1 or 2 RuvA tetramers; 4 subunits per hexamer contact DNA at a time. Coordinated motions by a converter formed by DNA-disengaged RuvB subunits stimulates ATP hydrolysis and nucleotide exchange. Immobilization of the converter enables RuvB to convert the ATP-contained energy into a lever motion, pulling 2 nucleotides of DNA out of the RuvA tetramer per ATP hydrolyzed, thus driving DNA branch migration. The RuvB motors rotate together with the DNA substrate, which together with the progressing nucleotide cycle form the mechanistic basis for DNA recombination by continuous HJ branch migration. Branch migration allows RuvC to scan DNA until it finds its consensus sequence, where it cleaves and resolves cruciform DNA. This chain is Holliday junction branch migration complex subunit RuvB, found in Latilactobacillus sakei subsp. sakei (strain 23K) (Lactobacillus sakei subsp. sakei).